The chain runs to 346 residues: Peripherin-2 (346 aa).

At Met1–Asn24 the chain is on the cytoplasmic side. A helical transmembrane segment spans residues Trp25 to Ile43. At Glu44–Pro61 the chain is on the lumenal side. Asn53 carries N-linked (GlcNAc...) asparagine glycosylation. The chain crosses the membrane as a helical span at residues Asn62–Lys80. Residues Ile81–Lys99 are Cytoplasmic-facing. The chain crosses the membrane as a helical span at residues Pro100–Arg123. The Lumenal segment spans residues Gly124–Ser264. N-linked (GlcNAc...) asparagine glycosylation occurs at Asn229. Residues Met265–Leu290 form a helical membrane-spanning segment. Residues Glu291 to Gly346 are Cytoplasmic-facing. The interaction with MREG stretch occupies residues Gln341–Gly346.

The protein belongs to the PRPH2/ROM1 family. In terms of assembly, homodimer; disulfide-linked. Forms a homotetramer. Forms a heterotetramer with ROM1. Homotetramer and heterotetramer core complexes go on to form higher order complexes by formation of intermolecular disulfide bonds. Interacts with MREG. Interacts with STX3. Interacts with SNAP25. In terms of tissue distribution, retina (photoreceptor). In rim region of ROS (rod outer segment) disks.

The protein resides in the membrane. It is found in the cell projection. The protein localises to the cilium. It localises to the photoreceptor outer segment. Its subcellular location is the photoreceptor inner segment. In terms of biological role, essential for retina photoreceptor outer segment disk morphogenesis, may also play a role with ROM1 in the maintenance of outer segment disk structure. Required for the maintenance of retinal outer nuclear layer thickness. Required for the correct development and organization of the photoreceptor inner segment. This Canis lupus familiaris (Dog) protein is Peripherin-2 (PRPH2).